Consider the following 253-residue polypeptide: Tetraspanin-3 (253 aa).

Topologically, residues 1–11 are cytoplasmic; sequence MGQCGITSSKT. The helical transmembrane segment at 12–32 threads the bilayer; it reads VLVFLNLIFWGAAGILCYVGA. Residues 33-50 lie on the Extracellular side of the membrane; sequence YVFITYDDYDHFFEDVYT. Residues 51–71 traverse the membrane as a helical segment; sequence LFPAVVIIAVGALLFIIGLIG. Residues 72-85 lie on the Cytoplasmic side of the membrane; that stretch reads CCATIRESRCGLAT. Residues 86–106 traverse the membrane as a helical segment; sequence FVFILLLVFVTEVVVVVLGYV. The Extracellular portion of the chain corresponds to 107-212; it reads YRAKVENEVD…KKLQEILMHV (106 aa). Asn-127, Asn-152, Asn-167, and Asn-183 each carry an N-linked (GlcNAc...) asparagine glycan. The helical transmembrane segment at 213–233 threads the bilayer; sequence IWAALAFAAIQLLGMLCACIV. At 234 to 253 the chain is on the cytoplasmic side; it reads LCRRSRDPAYELLITGGTYA.

Belongs to the tetraspanin (TM4SF) family. As to quaternary structure, interacts with claudin-11/CLDN11 and integrins.

The protein localises to the membrane. In terms of biological role, regulates the proliferation and migration of oligodendrocytes, a process essential for normal myelination and repair. This Mus musculus (Mouse) protein is Tetraspanin-3 (Tspan3).